A 428-amino-acid chain; its full sequence is Enolase (428 aa).

Gln-164 is a binding site for (2R)-2-phosphoglycerate. The active-site Proton donor is the Glu-208. Positions 245, 286, and 313 each coordinate Mg(2+). Positions 338, 367, 368, and 389 each coordinate (2R)-2-phosphoglycerate. The active-site Proton acceptor is the Lys-338.

This sequence belongs to the enolase family. The cofactor is Mg(2+).

The protein resides in the cytoplasm. Its subcellular location is the secreted. It is found in the cell surface. It catalyses the reaction (2R)-2-phosphoglycerate = phosphoenolpyruvate + H2O. Its pathway is carbohydrate degradation; glycolysis; pyruvate from D-glyceraldehyde 3-phosphate: step 4/5. Functionally, catalyzes the reversible conversion of 2-phosphoglycerate (2-PG) into phosphoenolpyruvate (PEP). It is essential for the degradation of carbohydrates via glycolysis. This Pyrococcus horikoshii (strain ATCC 700860 / DSM 12428 / JCM 9974 / NBRC 100139 / OT-3) protein is Enolase.